The following is a 272-amino-acid chain: L-aspartate dehydrogenase 3 (272 aa).

NAD(+) contacts are provided by A126 and N194. The active site involves H224.

The protein belongs to the L-aspartate dehydrogenase family.

It carries out the reaction L-aspartate + NADP(+) + H2O = oxaloacetate + NH4(+) + NADPH + H(+). The enzyme catalyses L-aspartate + NAD(+) + H2O = oxaloacetate + NH4(+) + NADH + H(+). Its pathway is cofactor biosynthesis; NAD(+) biosynthesis; iminoaspartate from L-aspartate (dehydrogenase route): step 1/1. Functionally, specifically catalyzes the NAD or NADP-dependent dehydrogenation of L-aspartate to iminoaspartate. This Bordetella bronchiseptica (strain ATCC BAA-588 / NCTC 13252 / RB50) (Alcaligenes bronchisepticus) protein is L-aspartate dehydrogenase 3.